Here is a 178-residue protein sequence, read N- to C-terminus: Thymidine kinase (178 aa).

Residue 13–20 (GPMFAGKS) coordinates ATP. The Proton acceptor role is filled by Glu-85. Phe-115 is a binding site for substrate. Zn(2+) is bound by residues Cys-140 and Cys-143. Substrate is bound at residue 159–163 (IEVIG). Zn(2+) contacts are provided by Cys-172 and Cys-175.

The protein belongs to the thymidine kinase family.

The enzyme catalyses thymidine + ATP = dTMP + ADP + H(+). In Oryctolagus cuniculus (Rabbit), this protein is Thymidine kinase (TK).